A 347-amino-acid chain; its full sequence is S-adenosylmethionine:tRNA ribosyltransferase-isomerase (347 aa).

It belongs to the QueA family. As to quaternary structure, monomer.

Its subcellular location is the cytoplasm. It catalyses the reaction 7-aminomethyl-7-carbaguanosine(34) in tRNA + S-adenosyl-L-methionine = epoxyqueuosine(34) in tRNA + adenine + L-methionine + 2 H(+). The protein operates within tRNA modification; tRNA-queuosine biosynthesis. Its function is as follows. Transfers and isomerizes the ribose moiety from AdoMet to the 7-aminomethyl group of 7-deazaguanine (preQ1-tRNA) to give epoxyqueuosine (oQ-tRNA). The sequence is that of S-adenosylmethionine:tRNA ribosyltransferase-isomerase from Gluconobacter oxydans (strain 621H) (Gluconobacter suboxydans).